Here is a 290-residue protein sequence, read N- to C-terminus: 33 kDa chaperonin (290 aa).

2 disulfide bridges follow: cysteine 235-cysteine 237 and cysteine 268-cysteine 271.

The protein belongs to the HSP33 family. Under oxidizing conditions two disulfide bonds are formed involving the reactive cysteines. Under reducing conditions zinc is bound to the reactive cysteines and the protein is inactive.

It localises to the cytoplasm. In terms of biological role, redox regulated molecular chaperone. Protects both thermally unfolding and oxidatively damaged proteins from irreversible aggregation. Plays an important role in the bacterial defense system toward oxidative stress. This chain is 33 kDa chaperonin, found in Streptococcus pyogenes serotype M18 (strain MGAS8232).